A 57-amino-acid chain; its full sequence is Exactin (57 aa).

4 disulfide bridges follow: cysteine 3–cysteine 19, cysteine 12–cysteine 37, cysteine 41–cysteine 49, and cysteine 50–cysteine 55.

The protein belongs to the three-finger toxin family. Short-chain subfamily. Orphan group XX sub-subfamily. Expressed by the venom gland.

Its subcellular location is the secreted. Functionally, anticoagulant protein that prevents the activation of factor X (F10). It acts by potently inhibiting the extrinsic tenase complex (ETC) (IC(50)=116.49 nM), a complex composed by active factor VII (F7a), tissue factor (TF) and F10. In addition, it shows weaker activities on other complexes. It weakly inhibits F10 activation by inhibiting the intrinsic tenase complex (IC(50)=4.05 uM), a complex composed by active factor IX (IXa, F9a), its cofactor factor VIII (VIIIa, F8a), and their substrate F10. It also weakly prevents prothrombin activation by inhibiting the prothrombinase complex (IC(50)=17.66 uM). It shows high kinetic constant towards F7a/TF/F10/phospholipids complex (Ki=30.62 nM) and lower kinetic constant towards F7a/TF/phospholipids complex (Ki=153.75 nM). This chain is Exactin, found in Hemachatus haemachatus (Rinkhals).